The primary structure comprises 484 residues: Protein nucleotidyltransferase YdiU (484 aa).

Residues glycine 87, glycine 89, arginine 90, lysine 110, aspartate 122, glycine 123, arginine 173, and arginine 180 each coordinate ATP. Aspartate 249 (proton acceptor) is an active-site residue. Mg(2+)-binding residues include asparagine 250 and aspartate 259. Position 259 (aspartate 259) interacts with ATP.

This sequence belongs to the SELO family. Mg(2+) serves as cofactor. Mn(2+) is required as a cofactor.

It carries out the reaction L-seryl-[protein] + ATP = 3-O-(5'-adenylyl)-L-seryl-[protein] + diphosphate. The catalysed reaction is L-threonyl-[protein] + ATP = 3-O-(5'-adenylyl)-L-threonyl-[protein] + diphosphate. The enzyme catalyses L-tyrosyl-[protein] + ATP = O-(5'-adenylyl)-L-tyrosyl-[protein] + diphosphate. It catalyses the reaction L-histidyl-[protein] + UTP = N(tele)-(5'-uridylyl)-L-histidyl-[protein] + diphosphate. It carries out the reaction L-seryl-[protein] + UTP = O-(5'-uridylyl)-L-seryl-[protein] + diphosphate. The catalysed reaction is L-tyrosyl-[protein] + UTP = O-(5'-uridylyl)-L-tyrosyl-[protein] + diphosphate. Functionally, nucleotidyltransferase involved in the post-translational modification of proteins. It can catalyze the addition of adenosine monophosphate (AMP) or uridine monophosphate (UMP) to a protein, resulting in modifications known as AMPylation and UMPylation. The chain is Protein nucleotidyltransferase YdiU from Lachnoclostridium phytofermentans (strain ATCC 700394 / DSM 18823 / ISDg) (Clostridium phytofermentans).